The chain runs to 132 residues: Small ribosomal subunit protein uS8c (132 aa).

It belongs to the universal ribosomal protein uS8 family. Part of the 30S ribosomal subunit.

The protein localises to the plastid. Its subcellular location is the chloroplast. One of the primary rRNA binding proteins, it binds directly to 16S rRNA central domain where it helps coordinate assembly of the platform of the 30S subunit. The protein is Small ribosomal subunit protein uS8c (rps8) of Phaeodactylum tricornutum (strain CCAP 1055/1).